A 189-amino-acid chain; its full sequence is dCTP deaminase (189 aa).

DCTP is bound by residues 112–117, 136–138, Gln157, Tyr171, and Gln181; these read KSTYAR and TLE. The active-site Proton donor/acceptor is Glu138.

The protein belongs to the dCTP deaminase family. As to quaternary structure, homotrimer.

The catalysed reaction is dCTP + H2O + H(+) = dUTP + NH4(+). It functions in the pathway pyrimidine metabolism; dUMP biosynthesis; dUMP from dCTP (dUTP route): step 1/2. In terms of biological role, catalyzes the deamination of dCTP to dUTP. This Halorhodospira halophila (strain DSM 244 / SL1) (Ectothiorhodospira halophila (strain DSM 244 / SL1)) protein is dCTP deaminase.